The chain runs to 227 residues: uncharacterized protein (227 aa).

Positions 1–21 (MELKKIAVGLTALLGMSVANA) are cleaved as a signal peptide.

This is an uncharacterized protein from Haemophilus influenzae (strain ATCC 51907 / DSM 11121 / KW20 / Rd).